A 557-amino-acid chain; its full sequence is Urocanate hydratase (557 aa).

The disordered stretch occupies residues 1-20; the sequence is MSNPRHNEREVRSPRGDELN. NAD(+)-binding positions include 52 to 53, Gln130, 176 to 178, Glu196, Arg201, 242 to 243, 263 to 267, 273 to 274, and Tyr322; these read GG, GMG, NA, QTSAH, and YL. The active site involves Cys410. Gly492 lines the NAD(+) pocket.

The protein belongs to the urocanase family. It depends on NAD(+) as a cofactor.

It is found in the cytoplasm. The enzyme catalyses 4-imidazolone-5-propanoate = trans-urocanate + H2O. Its pathway is amino-acid degradation; L-histidine degradation into L-glutamate; N-formimidoyl-L-glutamate from L-histidine: step 2/3. In terms of biological role, catalyzes the conversion of urocanate to 4-imidazolone-5-propionate. In Brucella suis (strain ATCC 23445 / NCTC 10510), this protein is Urocanate hydratase.